Here is a 481-residue protein sequence, read N- to C-terminus: Aspartyl/glutamyl-tRNA(Asn/Gln) amidotransferase subunit B (481 aa).

This sequence belongs to the GatB/GatE family. GatB subfamily. As to quaternary structure, heterotrimer of A, B and C subunits.

It catalyses the reaction L-glutamyl-tRNA(Gln) + L-glutamine + ATP + H2O = L-glutaminyl-tRNA(Gln) + L-glutamate + ADP + phosphate + H(+). The enzyme catalyses L-aspartyl-tRNA(Asn) + L-glutamine + ATP + H2O = L-asparaginyl-tRNA(Asn) + L-glutamate + ADP + phosphate + 2 H(+). Its function is as follows. Allows the formation of correctly charged Asn-tRNA(Asn) or Gln-tRNA(Gln) through the transamidation of misacylated Asp-tRNA(Asn) or Glu-tRNA(Gln) in organisms which lack either or both of asparaginyl-tRNA or glutaminyl-tRNA synthetases. The reaction takes place in the presence of glutamine and ATP through an activated phospho-Asp-tRNA(Asn) or phospho-Glu-tRNA(Gln). This chain is Aspartyl/glutamyl-tRNA(Asn/Gln) amidotransferase subunit B, found in Pseudomonas syringae pv. syringae (strain B728a).